A 527-amino-acid polypeptide reads, in one-letter code: Cyclin-L1 (527 aa).

The interval 1–37 is disordered; that stretch reads MASGPHPTSTAAAASASSAAPSAGGSSSGTTTTTTTT. Cyclin-like stretches follow at residues 89 to 191 and 204 to 288; these read ELIQ…RVLK and KIIV…ETLR. A Phosphothreonine modification is found at threonine 326. The interval 327–527 is disordered; the sequence is PALSTLGGFS…SRSGHGRHRR (201 aa). Residues serine 336 and serine 339 each carry the phosphoserine modification. Residues lysine 340 and lysine 348 each participate in a glycyl lysine isopeptide (Lys-Gly) (interchain with G-Cter in SUMO2) cross-link. Basic and acidic residues predominate over residues 343–353; that stretch reads SPREVKAEEKS. Residues serine 353 and serine 356 each carry the phosphoserine modification. Basic and acidic residues predominate over residues 362–371; it reads VKKEPEDRQQ. Lysine 363 participates in a covalent cross-link: Glycyl lysine isopeptide (Lys-Gly) (interchain with G-Cter in SUMO2). Serine 375 is modified (phosphoserine). Composition is skewed to basic residues over residues 383–419, 439–453, 461–477, and 487–499; these read DSKR…RRSR, RRHH…KAKH, SNRH…RSQS, and KKHR…HRDR. The interval 391–433 is RS; that stretch reads RSASRSRSRTRSRSRSHTPRRHYNNRRSRSGTYSSRSRSRSRS. Serine 446 is subject to Phosphoserine. Positions 500–509 are enriched in basic and acidic residues; that stretch reads RERSRSFERS. Residues 510-527 are compositionally biased toward basic residues; that stretch reads HKGKHHGGSRSGHGRHRR.

This sequence belongs to the cyclin family. Cyclin L subfamily. As to quaternary structure, interacts with POLR2A via its hyperphosphorylated C-terminal domain (CTD). Interacts with CDK11A, CDK11B, CDK12 and CDK13. May form a ternary complex with CDK11B and casein kinase II (CKII). Interacts with pre-mRNA-splicing factors, including at least SRSF1, SRSF2 AND SRSF7/SLU7. In terms of tissue distribution, ubiquitous with higher level in liver; expressed in striatal neurons.

The protein localises to the nucleus speckle. It is found in the nucleus. The protein resides in the nucleoplasm. In terms of biological role, involved in pre-mRNA splicing. Functions in association with cyclin-dependent kinases (CDKs). May play a role in the regulation of RNA polymerase II (pol II). Inhibited by the CDK-specific inhibitor CDKN1A/p21. The protein is Cyclin-L1 (Ccnl1) of Rattus norvegicus (Rat).